A 1517-amino-acid chain; its full sequence is DNA-directed RNA polymerase subunit beta' (1517 aa).

4 residues coordinate Zn(2+): C71, C73, C86, and C89. Positions 482, 484, and 486 each coordinate Mg(2+). Positions 812, 886, 893, and 896 each coordinate Zn(2+).

It belongs to the RNA polymerase beta' chain family. In terms of assembly, the RNAP catalytic core consists of 2 alpha, 1 beta, 1 beta' and 1 omega subunit. When a sigma factor is associated with the core the holoenzyme is formed, which can initiate transcription. Mg(2+) serves as cofactor. It depends on Zn(2+) as a cofactor.

It carries out the reaction RNA(n) + a ribonucleoside 5'-triphosphate = RNA(n+1) + diphosphate. DNA-dependent RNA polymerase catalyzes the transcription of DNA into RNA using the four ribonucleoside triphosphates as substrates. This chain is DNA-directed RNA polymerase subunit beta', found in Campylobacter jejuni subsp. jejuni serotype O:23/36 (strain 81-176).